We begin with the raw amino-acid sequence, 87 residues long: MNSLLMITACLALVGTVWAKEGYLVNSYTGCKFECFKLGDNDYCLRECRQQYGKGSGGYCYAFGCWCTHLYEQAVVWPLPNKTCNGK.

The N-terminal stretch at 1–19 is a signal peptide; it reads MNSLLMITACLALVGTVWA. One can recognise an LCN-type CS-alpha/beta domain in the interval 20–85; that stretch reads KEGYLVNSYT…VWPLPNKTCN (66 aa). Cystine bridges form between C31–C84, C35–C60, C44–C65, and C48–C67. N85 carries the asparagine amide modification.

Belongs to the long (4 C-C) scorpion toxin superfamily. Sodium channel inhibitor family. Beta subfamily. Expressed by the venom gland.

Its subcellular location is the secreted. Functionally, beta toxins bind voltage-independently at site-4 of sodium channels (Nav) and shift the voltage of activation toward more negative potentials thereby affecting sodium channel activation and promoting spontaneous and repetitive firing. This toxin is active only on mammals. The chain is Beta-mammal toxin Css4 from Centruroides suffusus (Durango bark scorpion).